Reading from the N-terminus, the 241-residue chain is Diacetyl reductase [(S)-acetoin forming] (241 aa).

NAD(+) is bound at residue 6–30; that stretch reads LVTGAGQGIGKAIALRLVKDGFAVA. Position 139 (serine 139) interacts with substrate. The active-site Proton acceptor is tyrosine 152. The active site involves lysine 156.

Belongs to the short-chain dehydrogenases/reductases (SDR) family. In terms of assembly, homotetramer.

The catalysed reaction is (S)-acetoin + NAD(+) = diacetyl + NADH + H(+). Catalyzes the irreversible reduction of 2,3-butanediol to (S)-acetoin in the presence of NADH. In Raoultella terrigena (Klebsiella terrigena), this protein is Diacetyl reductase [(S)-acetoin forming] (budC).